The primary structure comprises 130 residues: Large ribosomal subunit protein bL12c (130 aa).

The protein belongs to the bacterial ribosomal protein bL12 family. In terms of assembly, homodimer. Part of the ribosomal stalk of the 50S ribosomal subunit. Forms a multimeric L10(L12)X complex, where L10 forms an elongated spine to which 2 to 4 L12 dimers bind in a sequential fashion. Binds GTP-bound translation factors.

The protein resides in the plastid. Its function is as follows. Forms part of the ribosomal stalk which helps the ribosome interact with GTP-bound translation factors. Is thus essential for accurate translation. This Prototheca wickerhamii protein is Large ribosomal subunit protein bL12c.